A 605-amino-acid polypeptide reads, in one-letter code: NADH-ubiquinone oxidoreductase chain 5 (605 aa).

15 helical membrane-spanning segments follow: residues 8–28 (TLLS…YPYT), 34–54 (IYVK…TMIF), 87–107 (MILM…SMWY), 117–137 (FFKY…ANNL), 140–160 (LFIG…WWYG), 171–191 (AILY…WFLF), 241–261 (TPVS…FLLI), 273–293 (IQTM…ICAL), 301–321 (IVAF…GINQ), 324–344 (LAFL…LCSG), 366–386 (LPFT…MPFL), 409–429 (LFIT…IIYF), 457–477 (LLVG…PTTI), 482–502 (MPTY…IVAL), and 584–604 (IKLY…MLNF).

Belongs to the complex I subunit 5 family. In terms of assembly, core subunit of respiratory chain NADH dehydrogenase (Complex I) which is composed of 45 different subunits.

It localises to the mitochondrion inner membrane. It catalyses the reaction a ubiquinone + NADH + 5 H(+)(in) = a ubiquinol + NAD(+) + 4 H(+)(out). Its function is as follows. Core subunit of the mitochondrial membrane respiratory chain NADH dehydrogenase (Complex I) which catalyzes electron transfer from NADH through the respiratory chain, using ubiquinone as an electron acceptor. Essential for the catalytic activity and assembly of complex I. This is NADH-ubiquinone oxidoreductase chain 5 (MT-ND5) from Rousettus amplexicaudatus (Common rousette).